The sequence spans 220 residues: UPF0319 protein YccT (220 aa).

Residues 1–20 (MKTGALTTFLALCLPVTVFA) form the signal peptide.

The protein belongs to the UPF0319 family.

The sequence is that of UPF0319 protein YccT from Salmonella choleraesuis (strain SC-B67).